Consider the following 351-residue polypeptide: Lipoyl synthase, mitochondrial (351 aa).

Cysteine 84, cysteine 89, cysteine 95, cysteine 115, cysteine 119, cysteine 122, and serine 330 together coordinate [4Fe-4S] cluster. The region spanning 100 to 319 is the Radical SAM core domain; it reads DKSKATATIM…QKRAMDMGFL (220 aa).

This sequence belongs to the radical SAM superfamily. Lipoyl synthase family. It depends on [4Fe-4S] cluster as a cofactor.

It is found in the mitochondrion. The enzyme catalyses [[Fe-S] cluster scaffold protein carrying a second [4Fe-4S](2+) cluster] + N(6)-octanoyl-L-lysyl-[protein] + 2 oxidized [2Fe-2S]-[ferredoxin] + 2 S-adenosyl-L-methionine + 4 H(+) = [[Fe-S] cluster scaffold protein] + N(6)-[(R)-dihydrolipoyl]-L-lysyl-[protein] + 4 Fe(3+) + 2 hydrogen sulfide + 2 5'-deoxyadenosine + 2 L-methionine + 2 reduced [2Fe-2S]-[ferredoxin]. Its pathway is protein modification; protein lipoylation via endogenous pathway; protein N(6)-(lipoyl)lysine from octanoyl-[acyl-carrier-protein]: step 2/2. Its function is as follows. Catalyzes the radical-mediated insertion of two sulfur atoms into the C-6 and C-8 positions of the octanoyl moiety bound to the lipoyl domains of lipoate-dependent enzymes, thereby converting the octanoylated domains into lipoylated derivatives. The sequence is that of Lipoyl synthase, mitochondrial from Yarrowia lipolytica (strain CLIB 122 / E 150) (Yeast).